Consider the following 147-residue polypeptide: Large ribosomal subunit protein uL11 (147 aa).

It belongs to the universal ribosomal protein uL11 family. In terms of assembly, part of the ribosomal stalk of the 50S ribosomal subunit. Interacts with L10 and the large rRNA to form the base of the stalk. L10 forms an elongated spine to which L12 dimers bind in a sequential fashion forming a multimeric L10(L12)X complex. One or more lysine residues are methylated.

Functionally, forms part of the ribosomal stalk which helps the ribosome interact with GTP-bound translation factors. The chain is Large ribosomal subunit protein uL11 from Bacteroides fragilis (strain ATCC 25285 / DSM 2151 / CCUG 4856 / JCM 11019 / LMG 10263 / NCTC 9343 / Onslow / VPI 2553 / EN-2).